Consider the following 349-residue polypeptide: uncharacterized protein (349 aa).

This is an uncharacterized protein from Ostreid herpesvirus 1 (isolate France) (OsHV-1).